Reading from the N-terminus, the 54-residue chain is UPF0391 membrane protein Pnap_0920 (54 aa).

2 helical membrane-spanning segments follow: residues 6-26 (VVFL…IAAG) and 30-50 (IAKI…VVSL).

The protein belongs to the UPF0391 family.

It localises to the cell membrane. The chain is UPF0391 membrane protein Pnap_0920 from Polaromonas naphthalenivorans (strain CJ2).